We begin with the raw amino-acid sequence, 900 residues long: Endoglucanase H (900 aa).

The first 44 residues, 1-44 (MKKRLLVSFLVLSIIVGLLSFQSLGNYNSGLKIGAWVGTQPSES), serve as a signal peptide directing secretion. One can recognise a GH26 domain in the interval 45 to 298 (AIKSFQELQG…NSSPEALAAY (254 aa)). E131 functions as the Proton donor in the catalytic mechanism. The active-site Nucleophile is the E244. Positions 300 to 630 (EAIGAGSSNP…DTEILNALFN (331 aa)) are catalytic. Positions 303-326 (GAGSSNPTPTPTWTSTPPSSSPKA) are disordered. Low complexity predominate over residues 306 to 324 (SSNPTPTPTWTSTPPSSSP). E460 (proton donor) is an active-site residue. The active-site Nucleophile is the E565. Residues 655–900 (AVGEKMLDDF…LLKAISEIPI (246 aa)) form the CBM11 domain. Positions 827–900 (PSIKHGDLNF…LLKAISEIPI (74 aa)) constitute a Dockerin domain.

It in the N-terminal section; belongs to the glycosyl hydrolase 5 (cellulase A) family. The protein in the C-terminal section; belongs to the glycosyl hydrolase 26 family.

The enzyme catalyses Endohydrolysis of (1-&gt;4)-beta-D-glucosidic linkages in cellulose, lichenin and cereal beta-D-glucans.. This enzyme catalyzes the endohydrolysis of 1,4-beta-glucosidic linkages in cellulose, lichenin and cereal beta-D-glucans. The protein is Endoglucanase H (celH) of Acetivibrio thermocellus (strain ATCC 27405 / DSM 1237 / JCM 9322 / NBRC 103400 / NCIMB 10682 / NRRL B-4536 / VPI 7372) (Clostridium thermocellum).